The primary structure comprises 550 residues: Arginine--tRNA ligase (550 aa).

The 'HIGH' region signature appears at 130 to 140; that stretch reads ANPTGPIHLGG.

This sequence belongs to the class-I aminoacyl-tRNA synthetase family. Monomer.

It localises to the cytoplasm. The catalysed reaction is tRNA(Arg) + L-arginine + ATP = L-arginyl-tRNA(Arg) + AMP + diphosphate. This Corynebacterium glutamicum (strain R) protein is Arginine--tRNA ligase.